Reading from the N-terminus, the 598-residue chain is Fibulin-1 (598 aa).

31 disulfides stabilise this stretch: Ala-1/Cys-25, Cys-7/Cys-26, Cys-28/Cys-52, Cys-29/Cys-59, Cys-42/Cys-60, Cys-96/Cys-106, Cys-102/Cys-115, Cys-117/Cys-130, Cys-136/Cys-149, Cys-143/Cys-158, Cys-164/Cys-176, Cys-182/Cys-195, Cys-189/Cys-204, Cys-210/Cys-222, Cys-228/Cys-242, Cys-257/Cys-270, Cys-275/Cys-288, Cys-282/Cys-297, Cys-299/Cys-312, Cys-318/Cys-330, Cys-326/Cys-339, Cys-341/Cys-354, Cys-360/Cys-369, Cys-365/Cys-378, Cys-380/Cys-394, Cys-400/Cys-413, Cys-409/Cys-422, Cys-424/Cys-438, Cys-444/Cys-457, Cys-451/Cys-466, and Cys-471/Cys-483. 2 consecutive Anaphylatoxin-like domains span residues 1–27 (ANEQDHCAAPRGDNASLEATFVKRCCH) and 28–60 (CCLLGRAAQAQGQSCEYNLMVGYQCGQVFRACC). An N-linked (GlcNAc...) asparagine glycan is attached at Asn-14. One can recognise an EGF-like 1 domain in the interval 92–131 (LNDRCRGGGPCKQQCRDTGDEVVCSCFVGYQLLSDGVSCE). An EGF-like 2; calcium-binding domain is found at 132-177 (DVNECITGSHSCRLGESCINTVGSFRCQRDSSCGTGYELTEDNSCK). Residues 178-223 (DIDQCESGIHNCLPDFICQNTLGSFRCRPKLQCKNGFIQDALANCI) enclose the EGF-like 3; calcium-binding domain. The region spanning 224 to 270 (DINECLSIVSAPCPTGHTCINTEGSYTQKNVPNCGRGYHLNEEGTRC) is the EGF-like 4; calcium-binding domain. One can recognise an EGF-like 5; calcium-binding domain in the interval 271–313 (DVNECAPPAEPCGKGHRCVNSPGSFRCECKTGYYFDGISRMCV). Residues 271–355 (DVNECAPPAE…RLSVDGRSCE (85 aa)) form a self-association and FN1-binding region. An EGF-like 6; calcium-binding domain is found at 314-355 (DVNECQRYPGRLCGHKCENTLGSYVCSCSVGFRLSVDGRSCE). Residues 356–395 (DINECSSSPCSQECANVYGSYQCYCRRGYQLSDVDGVTCE) form the EGF-like 7; calcium-binding domain. In terms of domain architecture, EGF-like 8; calcium-binding spans 396-439 (DIDECALPTGGHICSYRCINIPGSFQCSCPASGYRLAPNGRNCQ). An EGF-like 9; calcium-binding domain is found at 440-484 (DIDECVTGIHNCSINETCFNIQGGFRCLAFECPENYRRSAATRCE). Residues Asn-450 and Asn-454 are each glycosylated (N-linked (GlcNAc...) asparagine).

This sequence belongs to the fibulin family. Homomultimerizes and interacts with various extracellular matrix components. Interacts with FBLN7. Interacts with the mature/soluble form of DTR. Interacts with CCN3.

The protein resides in the secreted. It is found in the extracellular space. Its subcellular location is the extracellular matrix. Incorporated into fibronectin-containing matrix fibers. May play a role in cell adhesion and migration along protein fibers within the extracellular matrix (ECM). Could be important for certain developmental processes and contribute to the supramolecular organization of ECM architecture, in particular to those of basement membranes. May serve to anchor the mature/soluble form of DTR to its fibers as it migrates through the extracellular matrix. The direct physical association with DTR may be useful in such tissue developmental processes as wound healing. The polypeptide is Fibulin-1 (FBLN1) (Chlorocebus aethiops (Green monkey)).